A 168-amino-acid chain; its full sequence is MHKLNVLAALKWYGVALLVILLDQITKNVASHMLVLHQPEPITSFFNFTLRHNFGAAFSMFHDAGGWQRWFLALLAAGVSVLLIFWIAKLPKQKWMEALALALVLGGALGNLYDRMLLGYVVDFIVVHYKEHEWPAFNIADSAICIGAALLVWDSLFGTKVAKYGDAK.

A run of 3 helical transmembrane segments spans residues 6–26, 70–90, and 98–118; these read VLAALKWYGVALLVILLDQIT, WFLALLAAGVSVLLIFWIAKL, and ALALALVLGGALGNLYDRMLL. Residues D123 and D141 contribute to the active site. A helical membrane pass occupies residues 139 to 159; it reads IADSAICIGAALLVWDSLFGT.

Belongs to the peptidase A8 family.

It is found in the cell inner membrane. The enzyme catalyses Release of signal peptides from bacterial membrane prolipoproteins. Hydrolyzes -Xaa-Yaa-Zaa-|-(S,diacylglyceryl)Cys-, in which Xaa is hydrophobic (preferably Leu), and Yaa (Ala or Ser) and Zaa (Gly or Ala) have small, neutral side chains.. Its pathway is protein modification; lipoprotein biosynthesis (signal peptide cleavage). In terms of biological role, this protein specifically catalyzes the removal of signal peptides from prolipoproteins. This is Lipoprotein signal peptidase from Teredinibacter turnerae (strain ATCC 39867 / T7901).